A 115-amino-acid chain; its full sequence is Divalent-cation tolerance protein CutA (115 aa).

3 residues coordinate Cu cation: Cys19, His86, and His87.

The protein belongs to the CutA family. Homotrimer. It depends on Cu cation as a cofactor.

It localises to the cytoplasm. In terms of biological role, involved in resistance toward heavy metals. This Salmonella agona (strain SL483) protein is Divalent-cation tolerance protein CutA.